A 207-amino-acid polypeptide reads, in one-letter code: Small ribosomal subunit protein uS4 (207 aa).

The region spanning 97–160 (SRLDNVVYRM…KKQARIVEAL (64 aa)) is the S4 RNA-binding domain.

Belongs to the universal ribosomal protein uS4 family. As to quaternary structure, part of the 30S ribosomal subunit. Contacts protein S5. The interaction surface between S4 and S5 is involved in control of translational fidelity.

In terms of biological role, one of the primary rRNA binding proteins, it binds directly to 16S rRNA where it nucleates assembly of the body of the 30S subunit. Its function is as follows. With S5 and S12 plays an important role in translational accuracy. In Burkholderia pseudomallei (strain 1106a), this protein is Small ribosomal subunit protein uS4.